The following is a 598-amino-acid chain: Membrane protein insertase YidC (598 aa).

Residues 7–27 (NYFIAIALSVLIVLGWQFLYM) traverse the membrane as a helical segment. The segment at 37–76 (AQEAQKAQQQTEQVQQPAAGGQTPAQTSGAAPSGQAAATA) is disordered. Residues 40 to 76 (AQKAQQQTEQVQQPAAGGQTPAQTSGAAPSGQAAATA) show a composition bias toward low complexity. Helical transmembrane passes span 377-397 (FGVA…PLAS), 447-467 (WPVA…YITI), 492-512 (LFGL…WPLI), and 538-558 (WMPL…VIYW).

It belongs to the OXA1/ALB3/YidC family. Type 1 subfamily. In terms of assembly, interacts with the Sec translocase complex via SecD. Specifically interacts with transmembrane segments of nascent integral membrane proteins during membrane integration.

It localises to the cell inner membrane. Required for the insertion and/or proper folding and/or complex formation of integral membrane proteins into the membrane. Involved in integration of membrane proteins that insert both dependently and independently of the Sec translocase complex, as well as at least some lipoproteins. Aids folding of multispanning membrane proteins. This chain is Membrane protein insertase YidC, found in Rhizobium johnstonii (strain DSM 114642 / LMG 32736 / 3841) (Rhizobium leguminosarum bv. viciae).